The chain runs to 107 residues: Iron-binding protein IscA (107 aa).

3 residues coordinate Fe cation: Cys35, Cys99, and Cys101.

Belongs to the HesB/IscA family. Homodimer; may form tetramers and higher multimers. It depends on Fe cation as a cofactor.

Its function is as follows. Is able to transfer iron-sulfur clusters to apo-ferredoxin. Multiple cycles of [2Fe2S] cluster formation and transfer are observed, suggesting that IscA acts catalytically. Recruits intracellular free iron so as to provide iron for the assembly of transient iron-sulfur cluster in IscU in the presence of IscS, L-cysteine and the thioredoxin reductase system TrxA/TrxB. The chain is Iron-binding protein IscA from Klebsiella pneumoniae subsp. pneumoniae (strain ATCC 700721 / MGH 78578).